The chain runs to 343 residues: N-acetyl-gamma-glutamyl-phosphate reductase (343 aa).

C147 is a catalytic residue.

This sequence belongs to the NAGSA dehydrogenase family. Type 1 subfamily.

It is found in the cytoplasm. The catalysed reaction is N-acetyl-L-glutamate 5-semialdehyde + phosphate + NADP(+) = N-acetyl-L-glutamyl 5-phosphate + NADPH + H(+). Its pathway is amino-acid biosynthesis; L-arginine biosynthesis; N(2)-acetyl-L-ornithine from L-glutamate: step 3/4. In terms of biological role, catalyzes the NADPH-dependent reduction of N-acetyl-5-glutamyl phosphate to yield N-acetyl-L-glutamate 5-semialdehyde. The polypeptide is N-acetyl-gamma-glutamyl-phosphate reductase (Listeria monocytogenes serotype 4b (strain F2365)).